Consider the following 472-residue polypeptide: MSNIYIQEPPTNGKVLLKTTAGDIDIELWSKEAPKACRNFIQLCLEAYYDNTIFHRVVPGFIVQGGDPTGTGSGGESIYGAPFKDEFHSRLRFNRRGLVAMANAGSHDNGSQFFFTLGRADELNNKHTIFGKVTGDTVYNMLRLSEVDIDDDERPHNPHKIKSCEVLFNPFDDIIPREIKRLKKEKPEEEVKKLKPKGTKNFSLLSFGEEAEEEEEEVNRVSQSMKGKSKSSHDLLKDDPHLSSVPVVESEKGDAPDLVDDGEDESAEHDEYIDGDEKNLMRERIAKKLKKDTSANVKSAGEGEVEKKSVSRSEELRKEARQLKRELLAAKQKKVENAAKQAEKRSEEEEAPPDGAVAEYRREKQKYEALRKQQSKKGTSREDQTLALLNQFKSKLTQAIAETPENDIPETEVEDDEGWMSHVLQFEDKSRKVKDASMQDSDTFEIYDPRNPVNKRRREESKKLMREKKERR.

Residue Ser-2 is modified to N-acetylserine. The PPIase cyclophilin-type domain occupies 11 to 166 (TNGKVLLKTT…NPHKIKSCEV (156 aa)). N-linked (GlcNAc...) asparagine glycosylation is found at Asn-109 and Asn-201. Positions 206–230 (SFGEEAEEEEEEVNRVSQSMKGKSK) form a coiled coil. 2 disordered regions span residues 206 to 386 (SFGE…DQTL) and 398 to 472 (QAIA…KERR). Positions 231 to 241 (SSHDLLKDDPH) are enriched in basic and acidic residues. Residues 257–268 (DLVDDGEDESAE) show a composition bias toward acidic residues. 3 stretches are compositionally biased toward basic and acidic residues: residues 269 to 286 (HDEY…ERIA), 304 to 347 (EVEK…KRSE), and 359 to 371 (EYRR…EALR). A coiled-coil region spans residues 306–377 (EKKSVSRSEE…EALRKQQSKK (72 aa)). Ser-346 is modified (phosphoserine). Acidic residues predominate over residues 404–418 (PENDIPETEVEDDEG). Composition is skewed to basic and acidic residues over residues 425-437 (QFED…KDAS) and 457-472 (RREE…KERR).

Belongs to the cyclophilin-type PPIase family. As to quaternary structure, part of the activated spliceosome B/catalytic step 1 spliceosome, one of the forms of the spliceosome which has a well-formed active site but still cannot catalyze the branching reaction and is composed at least of 52 proteins, the U2, U5 and U6 snRNAs and the pre-mRNA. Recruited during early steps of activated spliceosome B maturation, it is probably one of the first proteins released from this complex as he matures to the spliceosome C complex. Component of the minor spliceosome, which splices U12-type introns.

It is found in the nucleus. Its function is as follows. As part of the spliceosome, plays a role in pre-mRNA splicing. Probable inactive PPIase with no peptidyl-prolyl cis-trans isomerase activity. As a component of the minor spliceosome, involved in the splicing of U12-type introns in pre-mRNAs. The chain is Spliceosome-associated protein CWC27 homolog from Homo sapiens (Human).